The chain runs to 351 residues: Epoxyqueuosine reductase (351 aa).

Asp-131 acts as the Proton donor in catalysis. Residues 177 to 205 (EDQPVDYGCGSCTRCVDFCPTKALLGDGR) enclose the 4Fe-4S ferredoxin-type domain. Residues Cys-185, Cys-188, Cys-191, Cys-195, Cys-211, Cys-237, Cys-240, and Cys-244 each contribute to the [4Fe-4S] cluster site.

Belongs to the QueG family. As to quaternary structure, monomer. Cob(II)alamin serves as cofactor. It depends on [4Fe-4S] cluster as a cofactor.

It is found in the cytoplasm. It catalyses the reaction epoxyqueuosine(34) in tRNA + AH2 = queuosine(34) in tRNA + A + H2O. It functions in the pathway tRNA modification; tRNA-queuosine biosynthesis. Functionally, catalyzes the conversion of epoxyqueuosine (oQ) to queuosine (Q), which is a hypermodified base found in the wobble positions of tRNA(Asp), tRNA(Asn), tRNA(His) and tRNA(Tyr). The sequence is that of Epoxyqueuosine reductase from Lactococcus garvieae (strain Lg2) (Enterococcus seriolicida).